Consider the following 80-residue polypeptide: Teretoxin Tsu6.5 (80 aa).

An N-terminal signal peptide occupies residues 1-21 (MAINGRLLCLCLVLGLVFESL). Positions 22–42 (GHPSVQEKRAAEDSKPSGERR) are excised as a propeptide.

It belongs to the teretoxin M (TM) superfamily. Contains 3 disulfide bonds. As to expression, expressed by the venom duct.

The protein resides in the secreted. The sequence is that of Teretoxin Tsu6.5 from Terebra subulata (Chocolate spotted auger).